A 511-amino-acid polypeptide reads, in one-letter code: Putative CBL-interacting protein kinase 13 (511 aa).

The Protein kinase domain occupies phenylalanine 25–phenylalanine 279. ATP-binding positions include leucine 31–valine 39 and lysine 54. The active-site Proton acceptor is aspartate 147. The tract at residues aspartate 165–glutamate 194 is activation loop. The interval valine 307–serine 340 is disordered. One can recognise an NAF domain in the interval aspartate 321–aspartate 383. The interval lysine 400–valine 429 is PPI.

This sequence belongs to the protein kinase superfamily. CAMK Ser/Thr protein kinase family. SNF1 subfamily. Mn(2+) is required as a cofactor.

The catalysed reaction is L-seryl-[protein] + ATP = O-phospho-L-seryl-[protein] + ADP + H(+). The enzyme catalyses L-threonyl-[protein] + ATP = O-phospho-L-threonyl-[protein] + ADP + H(+). In terms of biological role, CIPK serine-threonine protein kinases interact with CBL proteins. Binding of a CBL protein to the regulatory NAF domain of CIPK protein lead to the activation of the kinase in a calcium-dependent manner. This is Putative CBL-interacting protein kinase 13 (CIPK13) from Oryza sativa subsp. japonica (Rice).